Consider the following 381-residue polypeptide: Guanine nucleotide-binding protein G(olf) subunit alpha (381 aa).

A disordered region spans residues 1–25 (MGCLGNSSKTAEDQGVDEKERREAN). Gly2 carries the N-palmitoyl glycine lipid modification. Cys3 carries the S-palmitoyl cysteine lipid modification. Residues 10–25 (TAEDQGVDEKERREAN) are compositionally biased toward basic and acidic residues. The 341-residue stretch at 41–381 (ATHRLLLLGA…RMHLKQYELL (341 aa)) folds into the G-alpha domain. Residues 44 to 57 (RLLLLGAGESGKST) are G1 motif. Residues Glu52, Ser53, Gly54, Lys55, Ser56, and Thr57 each coordinate GTP. A Mg(2+)-binding site is contributed by Ser56. A Phosphothreonine modification is found at Thr178. The interval 183 to 191 (DLLRCRVLT) is G2 motif. Residues Leu185, Arg186, and Thr191 each coordinate GTP. Mg(2+)-binding residues include Thr191 and Asp210. Residues 206 to 215 (FHMFDVGGQR) are G3 motif. Residues Gly213, Asn279, Lys280, Asp282, and Ala353 each coordinate GTP. The interval 275–282 (ILFLNKQD) is G4 motif. Residues 351-356 (TCAVDT) are G5 motif.

It belongs to the G-alpha family. G(s) subfamily. As to quaternary structure, g proteins are composed of 3 units; alpha, beta and gamma. The alpha chain contains the guanine nucleotide binding site. Interacts with GAS2L2. Interacts (GDP-bound form) with RIC8B (via C-terminus); promoting GNAL folding and association with the plasma membrane.

The protein localises to the cell membrane. It carries out the reaction GTP + H2O = GDP + phosphate + H(+). Functionally, guanine nucleotide-binding protein (G protein) involved as transducer in olfactory signal transduction controlled by G protein-coupled receptors (GPCRs). Contains the guanine nucleotide binding site and alternates between an active, GTP-bound state and an inactive, GDP-bound state. Signaling by an activated GPCR promotes GDP release and GTP binding. The alpha subunit has a low GTPase activity that converts bound GTP to GDP, thereby terminating the signal. Both GDP release and GTP hydrolysis are modulated by numerous regulatory proteins. GNAL/G(olf) alpha specifically mediates olfactory signal transduction within the olfactory neuroepithelium and the basal ganglia following GPCRs activation. Acts by promoting the specific activation of adenylyl cyclase ADCY3, resulting in increased levels of the signaling molecule cAMP. In Rattus norvegicus (Rat), this protein is Guanine nucleotide-binding protein G(olf) subunit alpha.